The sequence spans 442 residues: Probable serine/threonine-protein kinase PBL17 (442 aa).

The N-myristoyl glycine moiety is linked to residue Gly2. Cys4 is lipidated: S-palmitoyl cysteine. Position 79 is a phosphothreonine (Thr79). A Protein kinase domain is found at 90-370 (FRPDYILGEG…NHVVEVLETL (281 aa)). ATP is bound by residues 96 to 104 (LGEGGFGVV) and Lys125. Phosphotyrosine is present on Tyr170. Asp220 acts as the Proton acceptor in catalysis. Ser254 bears the Phosphoserine mark. Thr255 and Thr260 each carry phosphothreonine. Tyr268 is subject to Phosphotyrosine. Residues 385–442 (HSRGKSVTLYEASSDSQGTRDGNGQRRRRPESGRSKSEAAVDTEKYVSTLSEPDTTKI) are disordered. Residues 395–406 (EASSDSQGTRDG) show a composition bias toward polar residues. The segment covering 414-429 (PESGRSKSEAAVDTEK) has biased composition (basic and acidic residues). Residues 430–442 (YVSTLSEPDTTKI) show a composition bias toward polar residues.

This sequence belongs to the protein kinase superfamily. Ser/Thr protein kinase family.

The protein localises to the cell membrane. The catalysed reaction is L-seryl-[protein] + ATP = O-phospho-L-seryl-[protein] + ADP + H(+). It carries out the reaction L-threonyl-[protein] + ATP = O-phospho-L-threonyl-[protein] + ADP + H(+). May be involved in plant defense signaling. The chain is Probable serine/threonine-protein kinase PBL17 from Arabidopsis thaliana (Mouse-ear cress).